A 1454-amino-acid chain; its full sequence is Serine/threonine-protein kinase VPS15 (1454 aa).

A lipid anchor (N-myristoyl glycine) is attached at G2. The Protein kinase domain occupies 27–300 (VHYVSQLNSS…LLNKYRGIFF (274 aa)). ATP is bound by residues 33–41 (LNSSRFLKT) and K54. D147 functions as the Proton acceptor in the catalytic mechanism. HEAT repeat units follow at residues 460–497 (NKID…SVRK), 576–613 (KLIQ…FFGR), 615–652 (RTND…LLGT), and 654–691 (TLEQ…TGLI). WD repeat units lie at residues 1078 to 1118 (NEPN…VGEV), 1126 to 1165 (DCSS…QESE), 1229 to 1268 (PRHG…LIRS), 1275 to 1315 (APIT…CQYA), 1344 to 1382 (RSLN…SSKA), and 1422 to 1454 (YHHD…GIFQ).

The protein belongs to the protein kinase superfamily. Ser/Thr protein kinase family. In terms of assembly, component of the autophagy-specific VPS34 PI3-kinase complex I composed of VPS15, VPS30, VPS34, ATG14 and ATG38; and of the VPS34 PI3-kinase complex II composed of VPS15, VPS30, VPS34 and VPS38. Interacts directly with ATG14 and GPA1. Interacts directly with VPS34. Post-translationally, autophosphorylated.

It localises to the golgi apparatus. It is found in the trans-Golgi network membrane. The protein localises to the endosome membrane. The enzyme catalyses L-seryl-[protein] + ATP = O-phospho-L-seryl-[protein] + ADP + H(+). It catalyses the reaction L-threonyl-[protein] + ATP = O-phospho-L-threonyl-[protein] + ADP + H(+). Serine/threonine-protein kinase required for cytoplasm to vacuole transport (Cvt) and autophagy as a part of the autophagy-specific VPS34 PI3-kinase complex I. This complex is essential to recruit the ATG8-phosphatidylinositol conjugate and the ATG12-ATG5 conjugate to the pre-autophagosomal structure. Is also involved in endosome-to-Golgi retrograde transport as part of the VPS34 PI3-kinase complex II. This second complex is required for the endosome-to-Golgi retrieval of PEP1 and KEX2, and the recruitment of VPS5 and VPS7, two components of the retromer complex, to endosomal membranes (probably through the synthesis of a specific pool of phosphatidylinositol 3-phosphate recruiting the retromer to the endosomes). By regulating VPS34 kinase activity, VPS15 appears to be essential for the efficient delivery of soluble hydrolases to the yeast vacuole. May function as a G protein beta subunit to propagate the pheromone response at the endosome with GPA1. The polypeptide is Serine/threonine-protein kinase VPS15 (Saccharomyces cerevisiae (strain ATCC 204508 / S288c) (Baker's yeast)).